A 941-amino-acid chain; its full sequence is Pre-mRNA-processing factor 6 (941 aa).

Positions 1–79 (MNKKKKPFLG…DEDLNDTNYD (79 aa)) are disordered. Positions 39–65 (DANDPVDDRHAPPGKRTVGDQMKKNQA) are enriched in basic and acidic residues. A compositionally biased stretch (acidic residues) spans 66–78 (ADDDDEDLNDTNY). Serine 143 is subject to Phosphoserine. Threonine 180, threonine 266, and threonine 275 each carry phosphothreonine. Position 279 is a phosphoserine (serine 279). HAT repeat units follow at residues 384–416 (TDIR…LEEP), 418–444 (DARI…ARLE), 445–476 (TYEN…LEEA), 554–586 (NALE…FEKN), 588–620 (GTRE…SKWL), 622–654 (GDVP…LESE), 689–721 (DNIR…IEEQ), 723–755 (EMME…LEEK), and 855–887 (RKIT…FELQ).

As to quaternary structure, identified in the spliceosome B complex. Identified in the spliceosome C complex. Associates with the U5 snRNP particle. Component of the U4/U6-U5 tri-snRNP complex composed of the U4, U6 and U5 snRNAs and at least PRPF3, PRPF4, PRPF6, PRPF8, PRPF31, SNRNP200, TXNL4A, SNRNP40, DDX23, CD2BP2, PPIH, SNU13, EFTUD2, SART1 and USP39, LSm proteins LSm2-8 and Sm proteins. Interacts with ARAF. Interacts with AR and NR3C1, but not ESR1, independently of the presence of hormones. Interacts with USH1G. In terms of processing, phosphorylated by PRP4K during spliceosome assembly. In terms of tissue distribution, widely expressed.

It is found in the nucleus. The protein resides in the nucleoplasm. The protein localises to the nucleus speckle. Involved in pre-mRNA splicing as component of the U4/U6-U5 tri-snRNP complex, one of the building blocks of the spliceosome. Enhances dihydrotestosterone-induced transactivation activity of AR, as well as dexamethasone-induced transactivation activity of NR3C1, but does not affect estrogen-induced transactivation. The chain is Pre-mRNA-processing factor 6 from Homo sapiens (Human).